A 480-amino-acid polypeptide reads, in one-letter code: GTPase Der (480 aa).

2 consecutive EngA-type G domains span residues 5 to 170 (PVVA…PSQE) and 178 to 351 (LKLA…QSSM). Residues 11 to 18 (GRPNVGKS), 58 to 62 (DTGGI), 123 to 126 (NKVD), 184 to 191 (GRPNVGKS), 231 to 235 (DTAGV), and 296 to 299 (NKWD) contribute to the GTP site. One can recognise a KH-like domain in the interval 352–436 (FEVSTNRLTQ…PLNVVFKLNE (85 aa)). Residues 438–454 (PYANKSDTPTKAKTQQL) are compositionally biased toward polar residues. The tract at residues 438 to 480 (PYANKSDTPTKAKTQQLRQRERNRAQKFTTKDKPRFTNKDKKR) is disordered. Residues 455-480 (RQRERNRAQKFTTKDKPRFTNKDKKR) show a composition bias toward basic and acidic residues.

Belongs to the TRAFAC class TrmE-Era-EngA-EngB-Septin-like GTPase superfamily. EngA (Der) GTPase family. In terms of assembly, associates with the 50S ribosomal subunit.

GTPase that plays an essential role in the late steps of ribosome biogenesis. The protein is GTPase Der of Psychrobacter cryohalolentis (strain ATCC BAA-1226 / DSM 17306 / VKM B-2378 / K5).